A 204-amino-acid polypeptide reads, in one-letter code: N-(5'-phosphoribosyl)anthranilate isomerase (204 aa).

The protein belongs to the TrpF family.

It catalyses the reaction N-(5-phospho-beta-D-ribosyl)anthranilate = 1-(2-carboxyphenylamino)-1-deoxy-D-ribulose 5-phosphate. It participates in amino-acid biosynthesis; L-tryptophan biosynthesis; L-tryptophan from chorismate: step 3/5. This chain is N-(5'-phosphoribosyl)anthranilate isomerase, found in Bacillus cereus (strain AH820).